Consider the following 635-residue polypeptide: Extracellular metalloproteinase 1 (635 aa).

An N-terminal signal peptide occupies residues Met-1 to Ala-19. A propeptide spanning residues His-20–His-246 is cleaved from the precursor. A glycan (N-linked (GlcNAc...) asparagine) is linked at Asn-287. His-430 contacts Zn(2+). Glu-431 is a catalytic residue. Residue His-434 participates in Zn(2+) binding. 3 N-linked (GlcNAc...) asparagine glycosylation sites follow: Asn-475, Asn-594, and Asn-623.

Belongs to the peptidase M36 family. The cofactor is Zn(2+).

The protein localises to the secreted. Functionally, secreted metalloproteinase probably acting as a virulence factor. The sequence is that of Extracellular metalloproteinase 1 (MEP1) from Arthroderma benhamiae (Trichophyton mentagrophytes).